A 120-amino-acid polypeptide reads, in one-letter code: Flagellar protein FliT (120 aa).

The tract at residues 1–50 (MTNFIPSLTDWHALHALSITMLDLAHSGKWDELIEQEMNYVQLVEGIARN) is required for homodimerization. The segment at 59–97 (LINQAKEILNAVLRNEAELKTLLQHRMEELRQLIDQTGK) is fliD binding.

The protein belongs to the FliT family. As to quaternary structure, homodimer. Interacts with FliD and FlhC.

Its subcellular location is the cytoplasm. The protein resides in the cytosol. Functionally, dual-function protein that regulates the transcription of class 2 flagellar operons and that also acts as an export chaperone for the filament-capping protein FliD. As a transcriptional regulator, acts as an anti-FlhDC factor; it directly binds FlhC, thus inhibiting the binding of the FlhC/FlhD complex to class 2 promoters, resulting in decreased expression of class 2 flagellar operons. As a chaperone, effects FliD transition to the membrane by preventing its premature polymerization, and by directing it to the export apparatus. The sequence is that of Flagellar protein FliT from Citrobacter koseri (strain ATCC BAA-895 / CDC 4225-83 / SGSC4696).